The primary structure comprises 67 residues: DNA-directed RNA polymerase subunit omega (67 aa).

It belongs to the RNA polymerase subunit omega family. In terms of assembly, the RNAP catalytic core consists of 2 alpha, 1 beta, 1 beta' and 1 omega subunit. When a sigma factor is associated with the core the holoenzyme is formed, which can initiate transcription.

The catalysed reaction is RNA(n) + a ribonucleoside 5'-triphosphate = RNA(n+1) + diphosphate. Its function is as follows. Promotes RNA polymerase assembly. Latches the N- and C-terminal regions of the beta' subunit thereby facilitating its interaction with the beta and alpha subunits. This chain is DNA-directed RNA polymerase subunit omega, found in Variovorax paradoxus (strain S110).